The primary structure comprises 156 residues: Protein FAM162A (156 aa).

The interval T37–S57 is disordered. Residues R78 to K104 are required for proapoptotic activity. The helical transmembrane segment at I105–I122 threads the bilayer.

The protein belongs to the UPF0389 family. As to quaternary structure, interacts with HSP90AB1; HSP90AB1 is essential for FAM162A mitochondrial localization and pro-apoptotic activity. Interacts with VDAC2; the interaction is probably involved in inducing mitochondrial permeability transition.

Its subcellular location is the mitochondrion membrane. In terms of biological role, proposed to be involved in regulation of apoptosis; the exact mechanism may differ between cell types/tissues. May be involved in hypoxia-induced cell death of transformed cells implicating cytochrome C release and caspase activation (such as CASP9) and inducing mitochondrial permeability transition. May be involved in hypoxia-induced cell death of neuronal cells probably by promoting release of AIFM1 from mitochondria to cytoplasm and its translocation to the nucleus; however, the involvement of caspases has been reported conflictingly. The sequence is that of Protein FAM162A (FAM162A) from Bos taurus (Bovine).